A 489-amino-acid chain; its full sequence is Dihydropyrimidinase 1 (489 aa).

The Zn(2+) site is built by His-61, His-63, and Lys-156. The residue at position 156 (Lys-156) is an N6-carboxylysine. A substrate-binding site is contributed by Tyr-161. Residues His-189 and His-245 each contribute to the Zn(2+) site. Substrate is bound at residue Ser-295. Asp-323 is a Zn(2+) binding site. Asn-344 lines the substrate pocket.

Belongs to the metallo-dependent hydrolases superfamily. Hydantoinase/dihydropyrimidinase family. As to quaternary structure, homotetramer. It depends on Zn(2+) as a cofactor. Post-translationally, carboxylation allows a single lysine to coordinate two zinc ions.

It localises to the nucleus. The enzyme catalyses 5,6-dihydrouracil + H2O = 3-(carbamoylamino)propanoate + H(+). This chain is Dihydropyrimidinase 1 (dhp-1), found in Caenorhabditis briggsae.